A 143-amino-acid chain; its full sequence is MIQKLFLLVRSLVILSIMLSLGNLIAYYIPSGVPGSIWGLLLLFLGLTTRVIHLNWIYLGASLLIRFMAVLFVPVSVGIIKYSDLLIEQINILLVPNIVSTCVTLLVIGFLGHYLYQMQSFTHKRKKVIKRKRKSGKTSQLVC.

A run of 4 helical transmembrane segments spans residues 1–21 (MIQKLFLLVRSLVILSIMLSL), 33–52 (VPGSIWGLLLLFLGLTTRVI), 60–80 (GASLLIRFMAVLFVPVSVGII), and 92–112 (ILLVPNIVSTCVTLLVIGFLG).

Belongs to the UPF0299 family.

It is found in the cell inner membrane. This Haemophilus influenzae (strain PittEE) protein is UPF0299 membrane protein CGSHiEE_04225.